The sequence spans 191 residues: Protein GrpE (191 aa).

The segment covering 1–14 (MEDQKQTPSNQTAT) has biased composition (polar residues). The disordered stretch occupies residues 1-35 (MEDQKQTPSNQTATPAGDEATSTAAASPETGAPDT). A compositionally biased stretch (low complexity) spans 19-35 (EATSTAAASPETGAPDT).

The protein belongs to the GrpE family. In terms of assembly, homodimer.

It localises to the cytoplasm. In terms of biological role, participates actively in the response to hyperosmotic and heat shock by preventing the aggregation of stress-denatured proteins, in association with DnaK and GrpE. It is the nucleotide exchange factor for DnaK and may function as a thermosensor. Unfolded proteins bind initially to DnaJ; upon interaction with the DnaJ-bound protein, DnaK hydrolyzes its bound ATP, resulting in the formation of a stable complex. GrpE releases ADP from DnaK; ATP binding to DnaK triggers the release of the substrate protein, thus completing the reaction cycle. Several rounds of ATP-dependent interactions between DnaJ, DnaK and GrpE are required for fully efficient folding. The chain is Protein GrpE from Cupriavidus taiwanensis (strain DSM 17343 / BCRC 17206 / CCUG 44338 / CIP 107171 / LMG 19424 / R1) (Ralstonia taiwanensis (strain LMG 19424)).